The sequence spans 273 residues: Dermonecrotic toxin LspiSicTox-betaIE1i (273 aa).

Mg(2+) is bound by residues Glu-25 and Asp-27. The Nucleophile role is filled by His-41. A disulfide bridge links Cys-45 with Cys-51. Residue Asp-85 coordinates Mg(2+).

Belongs to the arthropod phospholipase D family. Class I subfamily. Requires Mg(2+) as cofactor. In terms of tissue distribution, expressed by the venom gland.

It localises to the secreted. The catalysed reaction is an N-(acyl)-sphingosylphosphocholine = an N-(acyl)-sphingosyl-1,3-cyclic phosphate + choline. It carries out the reaction an N-(acyl)-sphingosylphosphoethanolamine = an N-(acyl)-sphingosyl-1,3-cyclic phosphate + ethanolamine. It catalyses the reaction a 1-acyl-sn-glycero-3-phosphocholine = a 1-acyl-sn-glycero-2,3-cyclic phosphate + choline. The enzyme catalyses a 1-acyl-sn-glycero-3-phosphoethanolamine = a 1-acyl-sn-glycero-2,3-cyclic phosphate + ethanolamine. In terms of biological role, dermonecrotic toxins cleave the phosphodiester linkage between the phosphate and headgroup of certain phospholipids (sphingolipid and lysolipid substrates), forming an alcohol (often choline) and a cyclic phosphate. This toxin acts on sphingomyelin (SM). It may also act on ceramide phosphoethanolamine (CPE), lysophosphatidylcholine (LPC) and lysophosphatidylethanolamine (LPE), but not on lysophosphatidylserine (LPS), and lysophosphatidylglycerol (LPG). It acts by transphosphatidylation, releasing exclusively cyclic phosphate products as second products. Induces dermonecrosis, hemolysis, increased vascular permeability, edema, inflammatory response, and platelet aggregation. In Loxosceles spinulosa (Recluse spider), this protein is Dermonecrotic toxin LspiSicTox-betaIE1i.